We begin with the raw amino-acid sequence, 295 residues long: Dipeptide transport system permease protein DppC (295 aa).

A run of 7 helical transmembrane segments spans residues 27–47 (ALIG…APYI), 97–117 (VFAG…LGLI), 132–152 (LIDI…VSIL), 156–178 (LANA…TRAA), 202–222 (MFIV…TMGI), 226–246 (ILEL…TPEL), and 262–282 (WLVT…NLMG). In terms of domain architecture, ABC transmembrane type-1 spans 93 to 282 (TRISVFAGFI…SLVLAFNLMG (190 aa)).

It belongs to the binding-protein-dependent transport system permease family. OppBC subfamily.

Its subcellular location is the cell inner membrane. Functionally, part of the ABC transporter DppBCDF involved in dipeptide transport. Responsible for the translocation of the substrate across the membrane. The chain is Dipeptide transport system permease protein DppC (dppC) from Haemophilus influenzae (strain ATCC 51907 / DSM 11121 / KW20 / Rd).